The primary structure comprises 391 residues: uncharacterized protein (391 aa).

A run of 12 helical transmembrane segments spans residues 7 to 27 (FILV…LPVI), 39 to 59 (AING…SPFM), 66 to 88 (LGFK…GFIW), 92 to 111 (VWVW…MLHF), 131 to 151 (SIYG…VPLV), 156 to 176 (SLPF…VFFL), 197 to 217 (FYQA…YGFL), 239 to 259 (VAII…PLGI), 269 to 289 (VLLV…VFPS), 292 to 312 (VIGG…TLGI), 329 to 349 (LLCG…GGWY), and 356 to 376 (ANLF…LVLG).

Belongs to the major facilitator superfamily.

The protein localises to the cell membrane. This is an uncharacterized protein from Bacillus subtilis (strain 168).